Reading from the N-terminus, the 104-residue chain is Large ribosomal subunit protein uL23 (104 aa).

This sequence belongs to the universal ribosomal protein uL23 family. Part of the 50S ribosomal subunit. Contacts protein L29, and trigger factor when it is bound to the ribosome.

Functionally, one of the early assembly proteins it binds 23S rRNA. One of the proteins that surrounds the polypeptide exit tunnel on the outside of the ribosome. Forms the main docking site for trigger factor binding to the ribosome. This Cupriavidus metallidurans (strain ATCC 43123 / DSM 2839 / NBRC 102507 / CH34) (Ralstonia metallidurans) protein is Large ribosomal subunit protein uL23.